Consider the following 389-residue polypeptide: Succinate--CoA ligase [ADP-forming] subunit beta (389 aa).

The region spanning 9–244 (KQLLAEYGIP…KTQEDETEVT (236 aa)) is the ATP-grasp domain. ATP contacts are provided by residues Lys46, 53-55 (GRG), Gly102, and Glu107. 2 residues coordinate Mg(2+): Asn199 and Asp213. Substrate is bound by residues Asn264 and 321-323 (GIV).

Belongs to the succinate/malate CoA ligase beta subunit family. As to quaternary structure, heterotetramer of two alpha and two beta subunits. Mg(2+) is required as a cofactor.

It catalyses the reaction succinate + ATP + CoA = succinyl-CoA + ADP + phosphate. It carries out the reaction GTP + succinate + CoA = succinyl-CoA + GDP + phosphate. The protein operates within carbohydrate metabolism; tricarboxylic acid cycle; succinate from succinyl-CoA (ligase route): step 1/1. Functionally, succinyl-CoA synthetase functions in the citric acid cycle (TCA), coupling the hydrolysis of succinyl-CoA to the synthesis of either ATP or GTP and thus represents the only step of substrate-level phosphorylation in the TCA. The beta subunit provides nucleotide specificity of the enzyme and binds the substrate succinate, while the binding sites for coenzyme A and phosphate are found in the alpha subunit. This Xanthomonas axonopodis pv. citri (strain 306) protein is Succinate--CoA ligase [ADP-forming] subunit beta.